A 496-amino-acid polypeptide reads, in one-letter code: O-acetyltransferase cpsE (496 aa).

A compositionally biased stretch (polar residues) spans 203 to 217; it reads IGTQGQLPDGVQSSD. The segment at 203-228 is disordered; sequence IGTQGQLPDGVQSSDDPTDGAGDIFE.

Belongs to the fumigaclavine B O-acetyltransferase family.

It catalyses the reaction campesine A + acetyl-CoA = campesine C + CoA. Its pathway is alkaloid biosynthesis. In terms of biological role, O-acetyltransferase; part of the gene cluster that mediates the biosynthesis of campesine G, a dimeric indole piperazine alkaloid that shows good insecticidal activity Galleria mellonella. Within the pathway, cpsE acetylates N13 of campesine A to produce campesine C. CpsE produces an inseparable mixture of two acyl-atropisomers due to the spontaneous rotation of an acyl group at N13 of piperazine ring. The non-canonical non-ribosomal peptide synthetase cpsA catalyzes the first steps of the pathway by producing L-tryptophanal and L-valinal from their respective amino-acids. These products condensate spontaneously to form trypyl-valyl pyrazine also known as didehydrocampesine A. The NmrA-like family domain-containing oxidoreductase cpsB is the next enzyme in cps pathway and reduces the unstable didehydrocampesine A to campesine A. The methyltransferase cpsF and the acetyltransferase cpsE both recognize N13 of piperazine ring to carry out methylation and acetylation of campesine A to produce campesine C and B, respectively. The cytochrome P450 monooxygenase cpsD then acts as a dimerase that catalyzes oxidative heterocoupling between campesine B and C to produce heterodimers with unexpected 6/5/6/6/6/6/5/6 eight-ring scaffold called campesine D. Finally,the cytochrome P450 monooxygenase cpsC is a regioselective dehydrogenase that catalyzes dehydrogenation reaction towards C2-N1 to produce campesine G. This Aspergillus campestris (strain IBT 28561) protein is O-acetyltransferase cpsE.